Reading from the N-terminus, the 395-residue chain is Elongation factor Tu (395 aa).

Residues 10–205 (KPHCNIGTIG…AVDSYIPQPE (196 aa)) enclose the tr-type G domain. The interval 19 to 26 (GHVDHGKT) is G1. GTP is bound at residue 19–26 (GHVDHGKT). Thr-26 contacts Mg(2+). The segment at 60–64 (GITIA) is G2. The G3 stretch occupies residues 81-84 (DCPG). GTP-binding positions include 81 to 85 (DCPGH) and 136 to 139 (NKMD). The tract at residues 136 to 139 (NKMD) is G4. Residues 173–175 (SAL) are G5.

It belongs to the TRAFAC class translation factor GTPase superfamily. Classic translation factor GTPase family. EF-Tu/EF-1A subfamily. Monomer.

Its subcellular location is the cytoplasm. It carries out the reaction GTP + H2O = GDP + phosphate + H(+). In terms of biological role, GTP hydrolase that promotes the GTP-dependent binding of aminoacyl-tRNA to the A-site of ribosomes during protein biosynthesis. The polypeptide is Elongation factor Tu (Acidiphilium cryptum (strain JF-5)).